Here is a 190-residue protein sequence, read N- to C-terminus: Frataxin homolog, mitochondrial (190 aa).

The protein belongs to the frataxin family. As to quaternary structure, monomer (probable predominant form). Oligomer. Interacts with IscU. Component of the mitochondrial core iron-sulfur cluster (ISC) assembly complex at least composed of the cysteine desulfurase Nfs1, the scaffold protein IscU, the accessory protein bcn92/Isd11/Lyrm4, and probably fh/frataxin.

Its subcellular location is the mitochondrion. The catalysed reaction is 4 Fe(2+) + O2 + 4 H(+) = 4 Fe(3+) + 2 H2O. In terms of biological role, promotes the biosynthesis of heme as well as the assembly and repair of iron-sulfur clusters by delivering Fe(2+) to proteins involved in these pathways. May play a role in the protection against iron-catalyzed oxidative stress through its ability to catalyze the oxidation of Fe(2+) to Fe(3+). May be able to store large amounts of the metal in the form of a ferrihydrite mineral by oligomerization. Required for ecdysteroidogenesis in the prothoracic gland which is necessary for larval to pupal transition. This is Frataxin homolog, mitochondrial from Drosophila melanogaster (Fruit fly).